A 707-amino-acid polypeptide reads, in one-letter code: Tryptophan synthase (707 aa).

The tract at residues 1-297 (MSEQLRQTFA…VKKEILDEFD (297 aa)) is tryptophan synthase alpha chain. Residues Glu-50 and Asp-61 each act as proton acceptor in the active site. The tract at residues 298 to 707 (ENHKHPIRFG…DLRFEEDPSA (410 aa)) is tryptophan synthase beta chain. Lys-384 bears the N6-(pyridoxal phosphate)lysine mark. Phosphoserine occurs at positions 540 and 683.

The protein in the N-terminal section; belongs to the TrpA family. In the C-terminal section; belongs to the TrpB family. The cofactor is pyridoxal 5'-phosphate.

The enzyme catalyses (1S,2R)-1-C-(indol-3-yl)glycerol 3-phosphate + L-serine = D-glyceraldehyde 3-phosphate + L-tryptophan + H2O. It functions in the pathway amino-acid biosynthesis; L-tryptophan biosynthesis; L-tryptophan from chorismate: step 5/5. In Saccharomyces cerevisiae (strain ATCC 204508 / S288c) (Baker's yeast), this protein is Tryptophan synthase (TRP5).